The sequence spans 475 residues: Putative poly(A) polymerase catalytic subunit (475 aa).

This sequence belongs to the poxviridae poly(A) polymerase catalytic subunit family. Highly divergent.

The protein localises to the virion. The enzyme catalyses RNA(n) + ATP = RNA(n)-3'-adenine ribonucleotide + diphosphate. Functionally, polymerase that creates the 3'-poly(A) tail of mRNAs. The chain is Putative poly(A) polymerase catalytic subunit from Ornithodoros (relapsing fever ticks).